The primary structure comprises 343 residues: Anthranilate phosphoribosyltransferase (343 aa).

5-phospho-alpha-D-ribose 1-diphosphate is bound by residues G86, 89 to 90 (GD), T94, 96 to 99 (NIST), 114 to 122 (KHGNRSASG), and S126. G86 lines the anthranilate pocket. S98 is a binding site for Mg(2+). An anthranilate-binding site is contributed by N117. Residue R172 participates in anthranilate binding. The Mg(2+) site is built by D231 and E232.

Belongs to the anthranilate phosphoribosyltransferase family. As to quaternary structure, homodimer. It depends on Mg(2+) as a cofactor.

The catalysed reaction is N-(5-phospho-beta-D-ribosyl)anthranilate + diphosphate = 5-phospho-alpha-D-ribose 1-diphosphate + anthranilate. It functions in the pathway amino-acid biosynthesis; L-tryptophan biosynthesis; L-tryptophan from chorismate: step 2/5. Functionally, catalyzes the transfer of the phosphoribosyl group of 5-phosphorylribose-1-pyrophosphate (PRPP) to anthranilate to yield N-(5'-phosphoribosyl)-anthranilate (PRA). The sequence is that of Anthranilate phosphoribosyltransferase from Synechococcus sp. (strain JA-3-3Ab) (Cyanobacteria bacterium Yellowstone A-Prime).